We begin with the raw amino-acid sequence, 339 residues long: NmrA-like family domain-containing oxidoreductase cpsB (339 aa).

Lys142 is a binding site for NADP(+).

Belongs to the NmrA-type oxidoreductase family.

It carries out the reaction didehydrocampesine A + 2 AH2 = campesine A + 2 A. It functions in the pathway alkaloid biosynthesis. Its function is as follows. Oxidoreductase; part of the gene cluster that mediates the biosynthesis of campesine G, a dimeric indole piperazine alkaloid that shows good insecticidal activity Galleria mellonella. Within the pathway, cpsB reduces the unstable (S,S)-trypyl-valyl dihydropiperazine (didehydrocampesine A) intermediate to (S, S)-trypyl-valyl-piperazine (campesine A) using two equivalents of NAD(P)H. The non-canonical non-ribosomal peptide synthetase cpsA catalyzes the first steps of the pathway by producing L-tryptophanal and L-valinal from their respective amino-acids. These products condensate spontaneously to form trypyl-valyl pyrazine also known as didehydrocampesine A. The NmrA-like family domain-containing oxidoreductase cpsB is the next enzyme in cps pathway and reduces the unstable didehydrocampesine A to campesine A. The methyltransferase cpsF and the acetyltransferase cpsE both recognize N13 of piperazine ring to carry out methylation and acetylation of campesine A to produce campesine C and B, respectively. The cytochrome P450 monooxygenase cpsD then acts as a dimerase that catalyzes oxidative heterocoupling between campesine B and C to produce heterodimers with unexpected 6/5/6/6/6/6/5/6 eight-ring scaffold called campesine D. Finally,the cytochrome P450 monooxygenase cpsC is a regioselective dehydrogenase that catalyzes dehydrogenation reaction towards C2-N1 to produce campesine G. This chain is NmrA-like family domain-containing oxidoreductase cpsB, found in Aspergillus campestris (strain IBT 28561).